A 300-amino-acid chain; its full sequence is MDINKVLKERQKWFEWKNIKPIYEKIVQWQIENKQLNVKNVKLNDIIEITLDENKEKLKEIEQIAKMLKPWRKGPFKINDLFIDTEWRSFIKWNIIKPHINLENKDVLDVGCNNGYYMFRMLEMNPKSITGFDPSALFNLQFEFINNFIKSDIEYKLLGVEHIPFYDKKFDTIFCLGVLYHRPDPITMLKELKAGLNPGGEVILDTLIIEGDEEIALCPVRYQKMKNVYFIPTLKALYNWIEKAKFKDVKFIGKRYTDLEEQRKTDWIEGESLNNFLNEDLTKTVEGYPPPLRVYLKLKN.

Residues Lys-73, Trp-87, Lys-92, Gly-111, 133–135, 160–161, Tyr-180, and Arg-293 each bind carboxy-S-adenosyl-L-methionine; these read DPS and VE.

It belongs to the class I-like SAM-binding methyltransferase superfamily. CmoB family. Homotetramer.

It catalyses the reaction carboxy-S-adenosyl-L-methionine + 5-hydroxyuridine(34) in tRNA = 5-carboxymethoxyuridine(34) in tRNA + S-adenosyl-L-homocysteine + H(+). Its function is as follows. Catalyzes carboxymethyl transfer from carboxy-S-adenosyl-L-methionine (Cx-SAM) to 5-hydroxyuridine (ho5U) to form 5-carboxymethoxyuridine (cmo5U) at position 34 in tRNAs. This Nautilia profundicola (strain ATCC BAA-1463 / DSM 18972 / AmH) protein is tRNA U34 carboxymethyltransferase.